Here is a 441-residue protein sequence, read N- to C-terminus: N-acetyl-S-(2-succino)cysteine monooxygenase (441 aa).

Aspartate 59, threonine 96, histidine 146, tyrosine 150, serine 220, and serine 221 together coordinate FMN.

Belongs to the NtaA/SnaA/DszA monooxygenase family. As to quaternary structure, homodimer. FMN serves as cofactor.

The enzyme catalyses N-acetyl-S-(2-succino)-L-cysteine + NADH + O2 + H(+) = N-acetyl-L-cysteine + oxaloacetate + NAD(+) + H2O. Its pathway is amino-acid biosynthesis; L-cysteine biosynthesis. Catalyzes the oxidative cleavage of the C-S bond of N-acetyl-S-(2-succino)cysteine, forming oxaloacetate and N-acetylcysteine (NAC). Is involved in a S-(2-succino)cysteine (2SC) degradation pathway that allows B.subtilis to grow on 2SC as a sole sulfur source, via its metabolization to cysteine. Shows almost no activity on S-succinylglutathione and 2SC. The protein is N-acetyl-S-(2-succino)cysteine monooxygenase of Bacillus subtilis (strain 168).